The following is a 201-amino-acid chain: Recombination protein RecR (201 aa).

The segment at 60-75 adopts a C4-type zinc-finger fold; that stretch reads CHACGNVDTSDPCTIC. In terms of domain architecture, Toprim spans 83 to 178; it reads TTLVVVEDVS…TITRLAHGVP (96 aa).

Belongs to the RecR family.

Its function is as follows. May play a role in DNA repair. It seems to be involved in an RecBC-independent recombinational process of DNA repair. It may act with RecF and RecO. The sequence is that of Recombination protein RecR from Methylorubrum populi (strain ATCC BAA-705 / NCIMB 13946 / BJ001) (Methylobacterium populi).